The sequence spans 717 residues: uncharacterized protein (717 aa).

A helical membrane pass occupies residues 19-38 (VFLSTIFVSIIFCLGILFLV).

This sequence to E.coli YtfN.

It is found in the membrane. This is an uncharacterized protein from Buchnera aphidicola subsp. Baizongia pistaciae (strain Bp).